A 492-amino-acid chain; its full sequence is MKQKCVLIITDGIGYNKNSKFNAFEAAKKPSYEKLFKEVPNSLLKTSGLAVGLPEGQMGNSEVGHMCIGSGRIIYQNLVRINKAIKNKELEKNENLQKLLAKCKRVHIIGLYSDGGVHSMDTHFKAMLEICAKNGNEVFAHAITDGRDVSPKSGLNFIKDLKGFCENLGVHFATLCGRFYSMDRDKRWDRVKEYYECLLGKAYKVPNLLEYLQKSYDENITDEFIKATQNENYKGMREEDGIIFINFRNDRMKQLVEVLNSKDFKEFEREKVFENLLTMSVYDDKFKLPVLFEKEKIENTLAQVISKAGLSQLHTAETEKYAHVTFFFNGGKEELLENETRVLISSPKVKTYDEKPQMSAFEVCDAVKKGIEKGEDFIVVNFANGDMVGHTGDFNAAIKAVEAVDTCLGEIVECAKKHDYAFIITSDHGNCEAMQDEKGNLLTNHTTFDVFVFVQASGVSKIKANMGLSNIAASVLKILDLEIPKEMNEALF.

Positions 11 and 61 each coordinate Mn(2+). Serine 61 (phosphoserine intermediate) is an active-site residue. Substrate contacts are provided by residues histidine 118, 147 to 148, arginine 178, arginine 184, 248 to 251, and lysine 320; these read RD and RNDR. Mn(2+) is bound by residues aspartate 386, histidine 390, aspartate 427, histidine 428, and histidine 445.

It belongs to the BPG-independent phosphoglycerate mutase family. As to quaternary structure, monomer. Requires Mn(2+) as cofactor.

The enzyme catalyses (2R)-2-phosphoglycerate = (2R)-3-phosphoglycerate. The protein operates within carbohydrate degradation; glycolysis; pyruvate from D-glyceraldehyde 3-phosphate: step 3/5. In terms of biological role, catalyzes the interconversion of 2-phosphoglycerate and 3-phosphoglycerate. This is 2,3-bisphosphoglycerate-independent phosphoglycerate mutase from Campylobacter jejuni subsp. doylei (strain ATCC BAA-1458 / RM4099 / 269.97).